A 657-amino-acid polypeptide reads, in one-letter code: UvrABC system protein B (657 aa).

The region spanning 29–416 (KLAEFQTNEQ…LSHNNVVEQL (388 aa)) is the Helicase ATP-binding domain. 42 to 49 (GATGTGKT) is an ATP binding site. The Beta-hairpin motif lies at 95-118 (YFDFYQPEAYLPAKGVYIEKSATV). Positions 435–597 (QVEDLVSEII…KTPMTVQKPI (163 aa)) constitute a Helicase C-terminal domain. The 36-residue stretch at 615 to 650 (AALIKQLTKEMKQAAANQNYELAIEIRDSIFELEKQ) folds into the UVR domain.

Belongs to the UvrB family. Forms a heterotetramer with UvrA during the search for lesions. Interacts with UvrC in an incision complex.

It is found in the cytoplasm. In terms of biological role, the UvrABC repair system catalyzes the recognition and processing of DNA lesions. A damage recognition complex composed of 2 UvrA and 2 UvrB subunits scans DNA for abnormalities. Upon binding of the UvrA(2)B(2) complex to a putative damaged site, the DNA wraps around one UvrB monomer. DNA wrap is dependent on ATP binding by UvrB and probably causes local melting of the DNA helix, facilitating insertion of UvrB beta-hairpin between the DNA strands. Then UvrB probes one DNA strand for the presence of a lesion. If a lesion is found the UvrA subunits dissociate and the UvrB-DNA preincision complex is formed. This complex is subsequently bound by UvrC and the second UvrB is released. If no lesion is found, the DNA wraps around the other UvrB subunit that will check the other stand for damage. This chain is UvrABC system protein B, found in Mycoplasma pneumoniae (strain ATCC 29342 / M129 / Subtype 1) (Mycoplasmoides pneumoniae).